The sequence spans 201 residues: Large ribosomal subunit protein uL4 (201 aa).

The interval 43–69 (TKAQKTRSEVAGGGKKPWRQKGTGRAR) is disordered.

The protein belongs to the universal ribosomal protein uL4 family. As to quaternary structure, part of the 50S ribosomal subunit.

Its function is as follows. One of the primary rRNA binding proteins, this protein initially binds near the 5'-end of the 23S rRNA. It is important during the early stages of 50S assembly. It makes multiple contacts with different domains of the 23S rRNA in the assembled 50S subunit and ribosome. In terms of biological role, forms part of the polypeptide exit tunnel. In Idiomarina loihiensis (strain ATCC BAA-735 / DSM 15497 / L2-TR), this protein is Large ribosomal subunit protein uL4.